The chain runs to 379 residues: Galactose-1-phosphate uridylyltransferase (379 aa).

Residues 1 to 21 are disordered; sequence MSRSGTDPQQRQQASEADAAA. The segment covering 9 to 21 has biased composition (low complexity); the sequence is QQRQQASEADAAA. Residue cysteine 75 participates in Zn(2+) binding. UDP-alpha-D-glucose contacts are provided by residues alanine 81, 97–98, and asparagine 173; that span reads ND. Histidine 184 serves as a coordination point for Zn(2+). The active-site Tele-UMP-histidine intermediate is the histidine 186. Glutamine 188 contacts UDP-alpha-D-glucose. Residues glutamate 202, histidine 301, histidine 319, and histidine 321 each contribute to the Zn(2+) site. UDP-alpha-D-glucose is bound by residues 334–337 and 339–340; these read KFMV and YE.

This sequence belongs to the galactose-1-phosphate uridylyltransferase type 1 family. Homodimer. Zn(2+) serves as cofactor.

It carries out the reaction alpha-D-galactose 1-phosphate + UDP-alpha-D-glucose = alpha-D-glucose 1-phosphate + UDP-alpha-D-galactose. It functions in the pathway carbohydrate metabolism; galactose metabolism. Functionally, plays an important role in galactose metabolism. This chain is Galactose-1-phosphate uridylyltransferase (GALT), found in Homo sapiens (Human).